The chain runs to 591 residues: Negative elongation factor D (591 aa).

The segment at 1 to 44 (MAGPAPGTIMGEDYFGNASEWGEEADGGQHQEDDSGEGEDDAEV) is disordered. The segment covering 34–44 (DSGEGEDDAEV) has biased composition (acidic residues).

The protein belongs to the NELF-D family. As to quaternary structure, the NELF complex is composed of NELFA, NELFB, NELFCD and NELFE; NELFA and NELFCD form a stable subcomplex that binds primarily through NELFCD to the N-terminus of NELFB. Binds RNA which may help to stabilize the NELF complex on nucleic acid. In vitro, the NELFA:NELFCD subcomplex binds to ssDNA and ssRNA in a sequence- and structure-dependent manner. Interacts with ARAF1. Interacts with PCF11. Interacts with NELFB. Interacts with KAT8.

The protein localises to the nucleus. In terms of biological role, essential component of the NELF complex, a complex that negatively regulates the elongation of transcription by RNA polymerase II. The NELF complex, which acts via an association with the DSIF complex and causes transcriptional pausing, is counteracted by the P-TEFb kinase complex. This Mus musculus (Mouse) protein is Negative elongation factor D (Nelfcd).